Reading from the N-terminus, the 152-residue chain is Transcriptional repressor NrdR (152 aa).

A zinc finger spans residues 3–34; that stretch reads CPFCNAADSKVIDSRLAAEGCQIRRRRECVSC. Residues 49–139 form the ATP-cone domain; the sequence is PRVIKSNGKN…VYQDFQDVEA (91 aa).

It belongs to the NrdR family. Zn(2+) is required as a cofactor.

Its function is as follows. Negatively regulates transcription of bacterial ribonucleotide reductase nrd genes and operons by binding to NrdR-boxes. This chain is Transcriptional repressor NrdR, found in Acinetobacter baumannii (strain AB0057).